We begin with the raw amino-acid sequence, 227 residues long: MGGTASTRRVTFEADENENITVVKGIRLSENVIDRMKESSPSGSKSQRYSSVYGASVSDEDLKRRVAEELALEQAKKESEHQRRLKQARDLERERAAANEQLTRAVLRERISSEEERMKAKHLARQLEEKDRVMRKQDAFYKEQLARLEERSSEFYKVTTEEYQKAAEEVEAKFKRYEYHPVCADLQTKILQCYRQNTQQTLSCSALASQYMHCVNHAKQSMLEKGG.

Gly2 carries N-myristoyl glycine lipidation. At Ser29 the chain carries Phosphoserine. The interval 32–57 (VIDRMKESSPSGSKSQRYSSVYGASV) is disordered. Residues 39-50 (SSPSGSKSQRYS) show a composition bias toward polar residues. At Tyr49 the chain carries Phosphotyrosine. 4 positions are modified to phosphoserine: Ser50, Ser51, Ser56, and Ser58. The disordered stretch occupies residues 73–92 (EQAKKESEHQRRLKQARDLE). Lys142 carries the post-translational modification N6-acetyllysine. Residues 180 to 222 (HPVCADLQTKILQCYRQNTQQTLSCSALASQYMHCVNHAKQSM) enclose the CHCH domain. 2 short sequence motifs (cx9C motif) span residues 183-193 (CADLQTKILQC) and 204-214 (CSALASQYMHC). 2 disulfide bridges follow: Cys183–Cys214 and Cys193–Cys204.

The protein belongs to the MICOS complex subunit Mic19 family. Metazoan Mic19 subfamily. In terms of assembly, component of the mitochondrial contact site and cristae organizing system (MICOS) complex, composed of at least MICOS10/MIC10, CHCHD3/MIC19, CHCHD6/MIC25, APOOL/MIC27, IMMT/MIC60, APOO/MIC23/MIC26 and MICOS13/MIC13. This complex was also known under the names MINOS or MitOS complex. The MICOS complex associates with mitochondrial outer membrane proteins SAMM50, MTX1 and MTX2 (together described as components of the mitochondrial outer membrane sorting assembly machinery (SAM) complex) and DNAJC11, mitochondrial inner membrane protein TMEM11 and with HSPA9. The MICOS and SAM complexes together with DNAJC11 are part of a large protein complex spanning both membranes termed the mitochondrial intermembrane space bridging (MIB) complex. Interacts with HSPA1A/HSPA1B and OPA1, preferentially with the soluble OPA1 form.

Its subcellular location is the mitochondrion inner membrane. The protein resides in the cytoplasm. The protein localises to the nucleus. It localises to the mitochondrion. Component of the MICOS complex, a large protein complex of the mitochondrial inner membrane that plays crucial roles in the maintenance of crista junctions, inner membrane architecture, and formation of contact sites to the outer membrane. Has also been shown to function as a transcription factor which binds to the BAG1 promoter and represses BAG1 transcription. Plays an important role in the maintenance of the MICOS complex stability and the mitochondrial cristae morphology. The chain is MICOS complex subunit Mic19 (Chchd3) from Mus musculus (Mouse).